Consider the following 755-residue polypeptide: Subtilisin-like protease 4 (755 aa).

The N-terminal stretch at 1 to 20 (MDYFLFIALTFLLTFHVHNA) is a signal peptide. Positions 41 to 119 (YIIHVTGPEG…ISAHPQRVLH (79 aa)) constitute an Inhibitor I9 domain. A Peptidase S8 domain is found at 128–611 (FLGLQQDTGV…SGHVNPSRAN (484 aa)). D153 serves as the catalytic Charge relay system. A glycan (N-linked (GlcNAc...) asparagine) is linked at N182. The active-site Charge relay system is H217. N-linked (GlcNAc...) asparagine glycans are attached at residues N297, N325, N393, N468, and N529. The 86-residue stretch at 376-461 (PLAYAGKNGK…ATHVSYAAGI (86 aa)) folds into the PA domain. S544 serves as the catalytic Charge relay system. Residues N706 and N727 are each glycosylated (N-linked (GlcNAc...) asparagine).

It belongs to the peptidase S8 family.

The protein localises to the secreted. The protein resides in the extracellular space. It localises to the apoplast. Functionally, required for arbuscular mycorrhiza (AM) development during AM symbiosis with AM fungi (e.g. Glomeromycota intraradices). This chain is Subtilisin-like protease 4, found in Lotus japonicus (Lotus corniculatus var. japonicus).